The chain runs to 207 residues: Guanylate kinase (207 aa).

The Guanylate kinase-like domain occupies 4-184 (GTLYIVSAPS…ALSDLKTIIR (181 aa)). 11–18 (APSGAGKS) contributes to the ATP binding site.

It belongs to the guanylate kinase family.

It localises to the cytoplasm. The catalysed reaction is GMP + ATP = GDP + ADP. It carries out the reaction dZMP + ATP = dZDP + ADP. It functions in the pathway purine metabolism. Its function is as follows. Essential for recycling GMP and indirectly, cGMP. Functionally, (Microbial infection) Catalyzes the phosphorylation of dZMP to dZDP, when the bacterium is infected by a phage that produces the substrate for the synthesis of dZTP (2- amino-2'-deoxyadenosine 5'-triphosphate), which is then used by the phage as a DNA polymerase substrate. The protein is Guanylate kinase of Salmonella choleraesuis (strain SC-B67).